A 124-amino-acid polypeptide reads, in one-letter code: Small ribosomal subunit protein uS12 (124 aa).

Asp-89 bears the 3-methylthioaspartic acid mark. Residues 105–124 (SGVSDRRQGRSKYGAKRPKS) form a disordered region. Basic residues predominate over residues 113-124 (GRSKYGAKRPKS).

Belongs to the universal ribosomal protein uS12 family. Part of the 30S ribosomal subunit. Contacts proteins S8 and S17. May interact with IF1 in the 30S initiation complex.

With S4 and S5 plays an important role in translational accuracy. Its function is as follows. Interacts with and stabilizes bases of the 16S rRNA that are involved in tRNA selection in the A site and with the mRNA backbone. Located at the interface of the 30S and 50S subunits, it traverses the body of the 30S subunit contacting proteins on the other side and probably holding the rRNA structure together. The combined cluster of proteins S8, S12 and S17 appears to hold together the shoulder and platform of the 30S subunit. This chain is Small ribosomal subunit protein uS12, found in Colwellia psychrerythraea (strain 34H / ATCC BAA-681) (Vibrio psychroerythus).